A 1047-amino-acid polypeptide reads, in one-letter code: tRNA wybutosine-synthesizing protein 4 (1047 aa).

S-adenosyl-L-methionine-binding positions include R69, G95, D122, 169–170 (DL), and E196. In terms of domain architecture, JmjC spans 814-1003 (GRQYLRSISA…AAGRDVYGNR (190 aa)).

Belongs to the methyltransferase superfamily. LCMT family.

The catalysed reaction is 7-[(3S)-3-amino-3-carboxypropyl]wyosine(37) in tRNA(Phe) + S-adenosyl-L-methionine = 7-[(3S)-(3-amino-3-methoxycarbonyl)propyl]wyosine(37) in tRNA(Phe) + S-adenosyl-L-homocysteine. The enzyme catalyses 7-[(3S)-(3-amino-3-methoxycarbonyl)propyl]wyosine(37) in tRNA(Phe) + S-adenosyl-L-methionine + CO2 = wybutosine(37) in tRNA(Phe) + S-adenosyl-L-homocysteine + 2 H(+). It functions in the pathway tRNA modification; wybutosine-tRNA(Phe) biosynthesis. Functionally, probable S-adenosyl-L-methionine-dependent methyltransferase that acts as a component of the wybutosine biosynthesis pathway. Wybutosine is a hyper modified guanosine with a tricyclic base found at the 3'-position adjacent to the anticodon of eukaryotic phenylalanine tRNA. May methylate the carboxyl group of leucine residues to form alpha-leucine ester residues. The sequence is that of tRNA wybutosine-synthesizing protein 4 (ppm2) from Aspergillus fumigatus (strain ATCC MYA-4609 / CBS 101355 / FGSC A1100 / Af293) (Neosartorya fumigata).